Consider the following 86-residue polypeptide: Small ribosomal subunit protein bS20 (86 aa).

Residues 1–25 (MANIKSQQKRNRTNERARLRNKAVK) are disordered.

Belongs to the bacterial ribosomal protein bS20 family.

Its function is as follows. Binds directly to 16S ribosomal RNA. This Mycobacterium bovis (strain ATCC BAA-935 / AF2122/97) protein is Small ribosomal subunit protein bS20.